The primary structure comprises 320 residues: Cytochrome f (320 aa).

An N-terminal signal peptide occupies residues methionine 1–alanine 35. The heme site is built by tyrosine 36, cysteine 56, cysteine 59, and histidine 60. A helical transmembrane segment spans residues isoleucine 286 to lysine 306.

This sequence belongs to the cytochrome f family. The 4 large subunits of the cytochrome b6-f complex are cytochrome b6, subunit IV (17 kDa polypeptide, petD), cytochrome f and the Rieske protein, while the 4 small subunits are PetG, PetL, PetM and PetN. The complex functions as a dimer. Heme serves as cofactor.

The protein resides in the plastid. The protein localises to the chloroplast thylakoid membrane. Component of the cytochrome b6-f complex, which mediates electron transfer between photosystem II (PSII) and photosystem I (PSI), cyclic electron flow around PSI, and state transitions. The sequence is that of Cytochrome f from Welwitschia mirabilis (Tree tumbo).